The primary structure comprises 142 residues: MKTIFFKEHEAPRSWYLIDAAGKPLGRVAAKTAAMLRGKHKVSFAPHQEIGDYVVIINAEKVAVTGNKAKDKMYYTHSGYVGGLKSINFNGLIAKKPAEPLMIAIKGMLPKGPLGRKLLTNVKVYAGPEHPHQAQNPIAVEV.

It belongs to the universal ribosomal protein uL13 family. Part of the 50S ribosomal subunit.

Its function is as follows. This protein is one of the early assembly proteins of the 50S ribosomal subunit, although it is not seen to bind rRNA by itself. It is important during the early stages of 50S assembly. This chain is Large ribosomal subunit protein uL13, found in Treponema denticola (strain ATCC 35405 / DSM 14222 / CIP 103919 / JCM 8153 / KCTC 15104).